The primary structure comprises 475 residues: UDP-glucosyltransferase 102 (475 aa).

UDP-alpha-D-glucose contacts are provided by residues Ser-278, Trp-344–Ala-345, His-362–Glu-370, and Tyr-384–Gln-387.

The protein belongs to the UDP-glycosyltransferase family.

The protein operates within secondary metabolite biosynthesis; terpenoid biosynthesis. Functionally, probable component of the triterpene saponins (e.g. ginsenosides) biosynthetic pathway. No detectable activity toward protopanaxatriol (PPT). The protein is UDP-glucosyltransferase 102 (UGT102) of Panax ginseng (Korean ginseng).